The primary structure comprises 249 residues: Probable transglycosylase SceD 2 (249 aa).

The N-terminal stretch at 1-27 is a signal peptide; sequence MKKTVIASTLAVGLGVTGIAAGNSADA. 2 stretches are compositionally biased toward low complexity: residues 80–95 and 103–171; these read WSYGEGSGEGSNASSE and QQTA…SSSS. Positions 80–203 are disordered; it reads WSYGEGSGEG…PSSGASGKFQ (124 aa). 2 stretches are compositionally biased toward polar residues: residues 172–182 and 192–203; these read GVNAHLQQIAQ and TNPSSGASGKFQ.

Belongs to the transglycosylase family. SceD subfamily.

It localises to the secreted. Is able to cleave peptidoglycan and affects clumping and separation of bacterial cells. The chain is Probable transglycosylase SceD 2 (sceD2) from Staphylococcus saprophyticus subsp. saprophyticus (strain ATCC 15305 / DSM 20229 / NCIMB 8711 / NCTC 7292 / S-41).